The sequence spans 388 residues: Putative N(4)-(beta-N-acetylglucosaminyl)-L-asparaginase GL17147 (388 aa).

The N-terminal stretch at Met-1–Thr-20 is a signal peptide. Intrachain disulfides connect Cys-94/Cys-99 and Cys-193/Cys-209. Residue Thr-240 is the Nucleophile of the active site. Substrate is bound by residues Arg-268–Asp-271 and Thr-291–Gly-294. The cysteines at positions 351 and 378 are disulfide-linked.

This sequence belongs to the Ntn-hydrolase family. Heterotetramer of two alpha and two beta chains arranged as a dimer of alpha/beta heterodimers. Cleaved into an alpha and beta chain by autocatalysis; this activates the enzyme. The N-terminal residue of the beta subunit is responsible for the nucleophile hydrolase activity.

The catalysed reaction is N(4)-(beta-N-acetyl-D-glucosaminyl)-L-asparagine + H2O = N-acetyl-beta-D-glucosaminylamine + L-aspartate + H(+). Its function is as follows. Cleaves the GlcNAc-Asn bond which joins oligosaccharides to the peptide of asparagine-linked glycoproteins. This Drosophila persimilis (Fruit fly) protein is Putative N(4)-(beta-N-acetylglucosaminyl)-L-asparaginase GL17147.